We begin with the raw amino-acid sequence, 132 residues long: Small ribosomal subunit protein uS9 (132 aa).

The protein belongs to the universal ribosomal protein uS9 family.

The sequence is that of Small ribosomal subunit protein uS9 from Methanothrix thermoacetophila (strain DSM 6194 / JCM 14653 / NBRC 101360 / PT) (Methanosaeta thermophila).